The chain runs to 1926 residues: Rho GTPase-activating protein 21-A (1926 aa).

Residues 1-41 form a disordered region; it reads MATRRAIVPEQQQEPSSPASEISKNKDGQEQSEMVSPMEEE. Residues 10-22 are compositionally biased toward polar residues; it reads EQQQEPSSPASEI. The region spanning 77–162 is the PDZ domain; it reads HTSIKDEENG…TLELSVMPKD (86 aa). Disordered regions lie at residues 211-236, 353-378, 416-487, 571-592, 640-704, and 868-905; these read VEVP…TTQP, PTAQ…QIDW, TDYN…RSES, QPTR…DRSG, FQRK…DSDA, and GKLG…DVFS. Composition is skewed to polar residues over residues 216-236, 353-372, and 416-429; these read SGTS…TTQP, PTAQ…SPGP, and TDYN…FSGQ. The span at 441–451 shows a compositional bias: low complexity; it reads QQSVQMRQRSV. The segment covering 452-466 has biased composition (basic and acidic residues); the sequence is SQERLEDPVLMKEWP. The span at 468–479 shows a compositional bias: polar residues; sequence SASQDTLSSAVA. A compositionally biased stretch (polar residues) spans 640-669; that stretch reads FQRKTQTESASGFQLDSVKTSMSASSSPPA. Residues 906-1019 enclose the PH domain; it reads DSNKEGFLYF…WIKAIQENGN (114 aa). Residues 1044-1064 show a composition bias toward polar residues; it reads MSSASNKSEQSPKAPRQTLSI. Positions 1044 to 1107 are disordered; the sequence is MSSASNKSEQ…SPPKDKGSWR (64 aa). The span at 1083–1105 shows a compositional bias: basic and acidic residues; that stretch reads PKQESERRLFSKDDISPPKDKGS. Positions 1126–1318 constitute a Rho-GAP domain; it reads VRLDDCPPAH…TLIQKHDWFF (193 aa). 6 disordered regions span residues 1330-1381, 1396-1416, 1512-1540, 1573-1598, 1626-1658, and 1827-1915; these read VHEE…SGKD, ASRK…EDEL, QMEE…PKVV, LDPN…DERS, RQHR…TPRL, and STSE…LSGT. Residues 1512–1534 show a composition bias toward polar residues; the sequence is QMEESMSDSGTMLSNSSQASAQR. Polar residues-rich tracts occupy residues 1639-1653 and 1866-1902; these read VQAN…TEGS and TADI…NNFS.

The protein localises to the golgi apparatus membrane. It localises to the cell junction. It is found in the cytoplasmic vesicle membrane. The protein resides in the cytoplasm. Its subcellular location is the cytoskeleton. Functionally, GTPase-activating protein (GAP) for rhoa and cdc42. This chain is Rho GTPase-activating protein 21-A (arhgap21-a), found in Xenopus laevis (African clawed frog).